Consider the following 196-residue polypeptide: MTEIISTTILLVLIMDPLGNLPIFMTILKHLDVKRRRIVVIREMIIALIVMLLFLFVGEKILIILNLKTETVSISGGVILFLIAIKMIFPSEDNNNEISSSEEPFLVPLAIPLVAGPSLLATLMLLSHQYLHHMFYLVGSLLISWFFTVIILLSSSLFLKLFGSKGVNALERLMGLVLIMLSTQMFLDGIRAWFKN.

The next 6 helical transmembrane spans lie at 8-28 (TILL…MTIL), 45-65 (IIAL…LIIL), 71-91 (TVSI…IFPS), 105-125 (FLVP…TLML), 134-154 (MFYL…ILLS), and 174-194 (MGLV…RAWF).

This sequence belongs to the UPF0056 (MarC) family.

The protein resides in the cell membrane. This chain is UPF0056 membrane protein BU449, found in Buchnera aphidicola subsp. Acyrthosiphon pisum (strain APS) (Acyrthosiphon pisum symbiotic bacterium).